A 463-amino-acid chain; its full sequence is Ammonium transporter 1 (463 aa).

The Extracellular portion of the chain corresponds to 1 to 39; that stretch reads MVAGEIIKGVAAEITNGSSSSVVQKYLDCANQVAPDPGN. The helical transmembrane segment at 40-60 threads the bilayer; it reads TTWVLLSTILVLGMMPALAFF. The Cytoplasmic portion of the chain corresponds to 61–76; it reads EAGLLRSKNTLSIITQ. Residues 77-97 traverse the membrane as a helical segment; it reads IMSGIVVLTVMWQAFGYSLTF. At 98–127 the chain is on the extracellular side; that stretch reads GPDQKGIIGNLDHAFLINVSYDDCSPNAPN. A helical transmembrane segment spans residues 128–148; sequence IPAAAYAFFMMMFANITPLLM. Topologically, residues 149–160 are cytoplasmic; it reads TGAFAERVKFKA. Residues 161-181 traverse the membrane as a helical segment; the sequence is FIALTVAWEIIVFYPVAHWIW. Residues 182 to 194 are Extracellular-facing; it reads GGGWLHKYFGVLD. The helical transmembrane segment at 195 to 215 threads the bilayer; it reads FAGGIVIHTSAGVSALVIALY. At 216–233 the chain is on the cytoplasmic side; it reads VGRRKDFEKYGGEFPPSN. The chain crosses the membrane as a helical span at residues 234 to 254; it reads LPLATIGAALLWMGWFGFNAG. Over 255 to 265 the chain is Extracellular; sequence SALAAGNIATS. The helical transmembrane segment at 266 to 286 threads the bilayer; sequence AVASTQIGGSFSAIVWIILSA. Over 287–293 the chain is Cytoplasmic; sequence AKGKPNT. Residues 294–314 form a helical membrane-spanning segment; it reads VSVINGVIAGLAGITPASGYI. The Extracellular segment spans residues 315 to 316; it reads NS. The chain crosses the membrane as a helical span at residues 317-337; the sequence is QYSIGLGICLGLASYYSVVLL. The Cytoplasmic portion of the chain corresponds to 338 to 351; the sequence is KHKLHIDDALDVSS. Residues 352–372 form a helical membrane-spanning segment; the sequence is VHGLTGIIGSLAIGFCAELSV. Topologically, residues 373-392 are extracellular; it reads NPNGANGAFYGNPKLIGTQL. The chain crosses the membrane as a helical span at residues 393-413; sequence LGVVSVAVWAAAWTWVLLKII. Topologically, residues 414–463 are cytoplasmic; sequence DATIGVKIDESEEELGLDLVEHGEFAYHNISLQGNENHYSSVINSHDFFK.

This sequence belongs to the ammonia transporter channel (TC 1.A.11.2) family.

The protein localises to the cell membrane. It localises to the endosome membrane. Its subcellular location is the lysosome membrane. The protein resides in the cytoplasmic vesicle. It is found in the phagosome membrane. Functionally, ammonium transporter that mediates the excretion of ammonium. Controls ammonium homeostasis during growth and development. Ammonium has been shown to function as a morphogen at multiple steps during the development. This chain is Ammonium transporter 1 (amtA), found in Dictyostelium discoideum (Social amoeba).